The primary structure comprises 396 residues: Argininosuccinate synthase (396 aa).

9 to 17 (AYSGGLDTS) is an ATP binding site. An L-citrulline-binding site is contributed by Tyr-85. Gly-115 contacts ATP. L-aspartate-binding residues include Thr-117, Asn-121, and Asp-122. Asn-121 contacts L-citrulline. Residues Arg-125, Ser-173, Glu-258, and Tyr-270 each contribute to the L-citrulline site.

This sequence belongs to the argininosuccinate synthase family. Type 1 subfamily. In terms of assembly, homotetramer.

Its subcellular location is the cytoplasm. It catalyses the reaction L-citrulline + L-aspartate + ATP = 2-(N(omega)-L-arginino)succinate + AMP + diphosphate + H(+). It functions in the pathway amino-acid biosynthesis; L-arginine biosynthesis; L-arginine from L-ornithine and carbamoyl phosphate: step 2/3. In Streptococcus agalactiae serotype Ia (strain ATCC 27591 / A909 / CDC SS700), this protein is Argininosuccinate synthase.